Here is a 598-residue protein sequence, read N- to C-terminus: Transcriptional repressor tup12 (598 aa).

The segment at 118–177 (IASGVVPQSSKTKHGRNSVSFGKYGNAGPFNSDNSSKPLILNNGSSGGTPKNLRSPAIDS) is disordered. 7 WD repeats span residues 285–325 (EPPI…AMVF), 332–371 (LITLLQEESSKREGDLYVRSVAFSPDGKYLATGVEDQQIR), 374–413 (DIAQKRVYRLLTGHEQEIYSLDFSKDGKTLVSGSGDRTVC), 415–454 (WDVEAGEQKLILHTDDGVTTVMFSPDGQFIAAGSLDKVIR), 456–495 (WTSSGTLVEQLHGHEESVYSVAFSPDGKYLVSGSLDNTIK), 510–549 (YKEGGICKQTFTGHKDFILSVTVSPDGKWIISGSKDRTIQ), and 552–585 (SPDSPHSQLTLQGHNNSVISVAVSPNGHCFATGS).

It belongs to the WD repeat TUP1 family.

Functionally, transcriptional repressor. The chain is Transcriptional repressor tup12 (tup12) from Schizosaccharomyces pombe (strain 972 / ATCC 24843) (Fission yeast).